The sequence spans 1179 residues: DNA-directed RNA polymerase subunit beta' (1179 aa).

Zn(2+) contacts are provided by Cys-60, Cys-62, Cys-75, and Cys-78. Asp-450, Asp-452, and Asp-454 together coordinate Mg(2+). 4 residues coordinate Zn(2+): Cys-791, Cys-865, Cys-872, and Cys-875.

The protein belongs to the RNA polymerase beta' chain family. In terms of assembly, the RNAP catalytic core consists of 2 alpha, 1 beta, 1 beta' and 1 omega subunit. When a sigma factor is associated with the core the holoenzyme is formed, which can initiate transcription. Mg(2+) serves as cofactor. It depends on Zn(2+) as a cofactor.

It carries out the reaction RNA(n) + a ribonucleoside 5'-triphosphate = RNA(n+1) + diphosphate. Its function is as follows. DNA-dependent RNA polymerase catalyzes the transcription of DNA into RNA using the four ribonucleoside triphosphates as substrates. The chain is DNA-directed RNA polymerase subunit beta' from Alkaliphilus oremlandii (strain OhILAs) (Clostridium oremlandii (strain OhILAs)).